The following is a 363-amino-acid chain: Phospho-N-acetylmuramoyl-pentapeptide-transferase (363 aa).

9 helical membrane passes run 13–33 (ISGI…AFFL), 49–69 (LPLL…IPLL), 95–115 (MGGI…SNFA), 119–139 (LAVS…DWQI), 154–174 (LALQ…NQPS), 183–203 (WVSF…FVLV), 224–244 (AIAL…LMVF), 281–301 (AVAL…IFFV), and 343–363 (ELQV…ICLA).

This sequence belongs to the glycosyltransferase 4 family. MraY subfamily. It depends on Mg(2+) as a cofactor.

Its subcellular location is the cell inner membrane. The enzyme catalyses UDP-N-acetyl-alpha-D-muramoyl-L-alanyl-gamma-D-glutamyl-meso-2,6-diaminopimeloyl-D-alanyl-D-alanine + di-trans,octa-cis-undecaprenyl phosphate = di-trans,octa-cis-undecaprenyl diphospho-N-acetyl-alpha-D-muramoyl-L-alanyl-D-glutamyl-meso-2,6-diaminopimeloyl-D-alanyl-D-alanine + UMP. It functions in the pathway cell wall biogenesis; peptidoglycan biosynthesis. Catalyzes the initial step of the lipid cycle reactions in the biosynthesis of the cell wall peptidoglycan: transfers peptidoglycan precursor phospho-MurNAc-pentapeptide from UDP-MurNAc-pentapeptide onto the lipid carrier undecaprenyl phosphate, yielding undecaprenyl-pyrophosphoryl-MurNAc-pentapeptide, known as lipid I. The polypeptide is Phospho-N-acetylmuramoyl-pentapeptide-transferase (Nostoc punctiforme (strain ATCC 29133 / PCC 73102)).